A 70-amino-acid polypeptide reads, in one-letter code: DNA-directed RNA polymerase subunit epsilon (70 aa).

Belongs to the RNA polymerase subunit epsilon family. RNAP is composed of a core of 2 alpha, a beta and a beta' subunit. The core is associated with a delta subunit, and at least one of epsilon or omega. When a sigma factor is associated with the core the holoenzyme is formed, which can initiate transcription.

It catalyses the reaction RNA(n) + a ribonucleoside 5'-triphosphate = RNA(n+1) + diphosphate. In terms of biological role, a non-essential component of RNA polymerase (RNAP). The polypeptide is DNA-directed RNA polymerase subunit epsilon (Latilactobacillus sakei subsp. sakei (strain 23K) (Lactobacillus sakei subsp. sakei)).